We begin with the raw amino-acid sequence, 224 residues long: MDYIKKAIWGPDPKEQQRRIRSVLRKNGRNIEKSLRELTVLQNKTQQLIKKSAKKNDVRTVRLYAKELYQINKQYDRMYTSRAQLDSVRMKIDEAIRMNTLSNQMADSAGLMREVNSLVRLPQLRNTMIELEKELMKSGIISEMVDDTMESVGDVGEEMDEAVDEEVNKIVEQYTNEKFKNVDQVPTVELAANEEEQEIPDEKVDEEADRMVNEMRERLRALQN.

A Glycyl lysine isopeptide (Lys-Gly) (interchain with G-Cter in ubiquitin) cross-link involves residue Lys203.

The protein belongs to the SNF7 family. In terms of assembly, core component of the ESCRT-III complex (endosomal sorting required for transport complex III). ESCRT-III appears to be sequentially assembled as a flat lattice on the endosome membrane and forms a transient 450 kDa complex that contains DID4, oligomerized SNF7, VPS20 and VPS24. SNF7 oligomerization into a membrane-associated filament is nucleated by association of SNF7 with VPS20; the process is terminated through association of VPS24, possibly by capping the SNF7 filament. VPS24 subsequently associates with DID4/VPS2. Interacts with the VPS4. Interacts with DID2.

The protein localises to the endosome membrane. The protein resides in the endomembrane system. Functionally, class E VPS protein implicated in concentration and sorting of cargo proteins of the multivesicular body (MVB) for incorporation into intralumenal vesicles. The lumenal sequestrated membrane proteins will be targeted into the vacuole after fusion of the endosome with the vacuole. Acts a component of the ESCRT-III complex, which appears to be critical for late steps in MVB sorting, such as membrane invagination and final cargo sorting and recruitment oflate-acting components of the sorting machinery. The MVB pathway requires the sequential function of ESCRT-O, -I,-II and -III complex assemblies. The DID4/VPS2-VPS24 subcomplex is required for the VPS4-dependent dissociation of ESCRT-III. The polypeptide is Vacuolar protein-sorting-associated protein 24 (VPS24) (Saccharomyces cerevisiae (strain ATCC 204508 / S288c) (Baker's yeast)).